Consider the following 73-residue polypeptide: UPF0352 protein HD_1515 (73 aa).

The protein belongs to the UPF0352 family.

This chain is UPF0352 protein HD_1515, found in Haemophilus ducreyi (strain 35000HP / ATCC 700724).